The primary structure comprises 325 residues: MAGKGLKSLNEAMNALSIASKSCRALPMRQSSILPCRRSMASVATPPAANITRSVSEPWQPITNVPVTVYSFPELEPRSLESYSARHLHLPLRRDILHLAVIYEGDSTRRGMASTKTRYEVHGSHKKMSPQKGTGNARRGTRQSPLMKGGGKTFGPKPRDFSTKLNKKVYDLAWRTALSYRYKRGELIVTEDGLDLPLPNDFLWLAGGGKLSRELEDGYVRKWVHEFMTSLNWGKEAGRTTFITGDKRPNLFTGFELAGAEGRALELWDVDVKDLLETGRIVIERSALKEMIEDHQSDLVTRVAVQGLRQKGPNLGEVLVRAPRY.

The disordered stretch occupies residues 113-158 (ASTKTRYEVHGSHKKMSPQKGTGNARRGTRQSPLMKGGGKTFGPKP).

It belongs to the universal ribosomal protein uL4 family. Component of the mitochondrial large ribosomal subunit (mt-LSU). Mature N.crassa 74S mitochondrial ribosomes consist of a small (37S) and a large (54S) subunit. The 37S small subunit contains a 16S ribosomal RNA (16S mt-rRNA) and 32 different proteins. The 54S large subunit contains a 23S rRNA (23S mt-rRNA) and 42 different proteins.

The protein resides in the mitochondrion. Component of the mitochondrial ribosome (mitoribosome), a dedicated translation machinery responsible for the synthesis of mitochondrial genome-encoded proteins, including at least some of the essential transmembrane subunits of the mitochondrial respiratory chain. The mitoribosomes are attached to the mitochondrial inner membrane and translation products are cotranslationally integrated into the membrane. This chain is Large ribosomal subunit protein uL4m (yml6), found in Neurospora crassa (strain ATCC 24698 / 74-OR23-1A / CBS 708.71 / DSM 1257 / FGSC 987).